Reading from the N-terminus, the 177-residue chain is Large ribosomal subunit protein uL6 (177 aa).

This sequence belongs to the universal ribosomal protein uL6 family. In terms of assembly, part of the 50S ribosomal subunit.

In terms of biological role, this protein binds to the 23S rRNA, and is important in its secondary structure. It is located near the subunit interface in the base of the L7/L12 stalk, and near the tRNA binding site of the peptidyltransferase center. This Cereibacter sphaeroides (strain ATCC 17029 / ATH 2.4.9) (Rhodobacter sphaeroides) protein is Large ribosomal subunit protein uL6.